Reading from the N-terminus, the 291-residue chain is MKSEAKDGEEESLQTAFKKLRVDASGSIASLSVGEGASVRASVRAAVEDAKPKSACASKDSWHGSTRKSSRGAVRTQRRRRSKSPVLHPPKFIHCSTIASSSSQLKHKSQTDSPDGSSGLGISTPKEFNAGECSSSLDTNHTGAVAEPLRTSVPRLPSESKEEDSSDAPQVSQASLQANDLSDFQSVSKLNLGKPCVCIGKECQCKRWHDMEVYSFSGLQNVPPLAPERRSTLEDYSQSLHTRTLSGSPRSCSEQARVYVDDVTIEDLSGYMEYYLYIPKKMSHMAEMMYT.

Residues 48–174 (EDAKPKSACA…SSDAPQVSQA (127 aa)) form a disordered region. A compositionally biased stretch (basic residues) spans 65–83 (STRKSSRGAVRTQRRRRSK). Residues 132–142 (ECSSSLDTNHT) show a composition bias toward polar residues. Phosphothreonine is present on residues threonine 142 and threonine 232.

This chain is Oxidative stress-responsive serine-rich protein 1 (OSER1), found in Bos taurus (Bovine).